Consider the following 228-residue polypeptide: Sugar fermentation stimulation protein homolog (228 aa).

This sequence belongs to the SfsA family.

The protein is Sugar fermentation stimulation protein homolog of Desulfitobacterium hafniense (strain Y51).